The sequence spans 454 residues: Death-associated protein kinase 3 (454 aa).

Positions 13–275 constitute a Protein kinase domain; sequence YEMGEELGSG…IAQSLEHSWI (263 aa). ATP-binding positions include 19 to 27 and lysine 42; that span reads LGSGQFAIV. Serine 50 bears the Phosphoserine; by autocatalysis mark. The pyridone 6 site is built by glutamate 94 and valine 96. Aspartate 139 functions as the Proton acceptor in the catalytic mechanism. The activation segment stretch occupies residues 161–204; the sequence is DFGIAHKIEAGNEFKNIFGTPEFVAPEIVNYEPLGLEADMWSIG. Residues threonine 180 and threonine 225 each carry the phosphothreonine modification. A Phosphothreonine; by autocatalysis and ROCK1 modification is found at threonine 265. Threonine 299 carries the post-translational modification Phosphothreonine; by autocatalysis, DAPK1 and ROCK1. At threonine 306 the chain carries Phosphothreonine; by autocatalysis. Serine 309 bears the Phosphoserine; by DAPK1 mark. Serine 311 carries the phosphoserine; by autocatalysis and DAPK1 modification. Phosphoserine; by DAPK1 is present on residues serine 312, serine 318, and serine 326. The leucine-zipper stretch occupies residues 427–441; it reads VASEMRFVQDLVRAL.

It belongs to the protein kinase superfamily. CAMK Ser/Thr protein kinase family. DAP kinase subfamily. In terms of assembly, homooligomer in its kinase-active form (homotrimers and homodimers are reported); monomeric in its kinase-inactive form. Homodimerization is required for activation segment autophosphorylation. Isoform 1 and isoform 2 interact with myosin and PPP1R12A; interaction of isoform 1 with PPP1R12A is inhibited by RhoA dominant negative form. Interacts with NLK, DAXX, STAT3, RHOD (GTP-bound form) and TCP10L. Interacts with PAWR; the interaction is reported conflictingly: according to PubMed:17953487 does not interact with PAWR. Interacts with ULK1; may be a substrate of ULK1. Interacts with LUZP1; the interaction is likely to occur throughout the cell cycle and reduces the LUZP1-mediated suppression of MYL9 phosphorylation. Mg(2+) serves as cofactor. The phosphorylation status is critical for kinase activity, oligomerization and intracellular localization. Phosphorylation at Thr-180, Thr-225 and Thr-265 is essential for activity. The phosphorylated form is localized in the cytoplasm promoted by phosphorylation at Thr-299; nuclear translocation or retention is maximal when it is not phosphorylated. Phosphorylation increases the trimeric form, and its dephosphorylation favors a kinase-inactive monomeric form. Both isoform 1 and isoform 2 can undergo autophosphorylation. As to expression, widely expressed. Isoform 1 and isoform 2 are expressed in the bladder smooth muscle.

The protein localises to the nucleus. Its subcellular location is the PML body. It is found in the cytoplasm. The protein resides in the cytoskeleton. It localises to the microtubule organizing center. The protein localises to the centrosome. Its subcellular location is the chromosome. It is found in the centromere. The protein resides in the spindle. It localises to the midbody. It carries out the reaction L-seryl-[protein] + ATP = O-phospho-L-seryl-[protein] + ADP + H(+). It catalyses the reaction L-threonyl-[protein] + ATP = O-phospho-L-threonyl-[protein] + ADP + H(+). With respect to regulation, a sequential activation is proposed: autophosphorylation at consensus sites is leading to dimerization of the catalytic domain stabilized by phosphorylation at Ser-50 and activation segment exchange (producing an active confirmation of both kinase modules in trans) followed by phosphorylation at Thr-180 in the activation segment and at other regulatory sites. Phosphorylation at Thr-180, Thr-225 and Thr-265 is essential for activity. Oligomerization is required for full enzymatic activity. Inhibited by pyridone-6 (K00225), a potent, ATP-competitive inhibitor. In terms of biological role, serine/threonine kinase which is involved in the regulation of apoptosis, autophagy, transcription, translation and actin cytoskeleton reorganization. Involved in the regulation of smooth muscle contraction. Regulates both type I (caspase-dependent) apoptotic and type II (caspase-independent) autophagic cell deaths signal, depending on the cellular setting. Involved in regulation of starvation-induced autophagy. Regulates myosin phosphorylation in both smooth muscle and non-muscle cells. In smooth muscle, regulates myosin either directly by phosphorylating MYL12B and MYL9 or through inhibition of smooth muscle myosin phosphatase (SMPP1M) via phosphorylation of PPP1R12A; the inhibition of SMPP1M functions to enhance muscle responsiveness to Ca(2+) and promote a contractile state. Phosphorylates MYL12B in non-muscle cells leading to reorganization of actin cytoskeleton. Isoform 2 can phosphorylate myosin, PPP1R12A and MYL12B. Overexpression leads to condensation of actin stress fibers into thick bundles. Involved in actin filament focal adhesion dynamics. The function in both reorganization of actin cytoskeleton and focal adhesion dissolution is modulated by RhoD. Positively regulates canonical Wnt/beta-catenin signaling through interaction with NLK and TCF7L2. Phosphorylates RPL13A on 'Ser-77' upon interferon-gamma activation which is causing RPL13A release from the ribosome, RPL13A association with the GAIT complex and its subsequent involvement in transcript-selective translation inhibition. Enhances transcription from AR-responsive promoters in a hormone- and kinase-dependent manner. Involved in regulation of cell cycle progression and cell proliferation. May be a tumor suppressor. The protein is Death-associated protein kinase 3 (DAPK3) of Homo sapiens (Human).